Consider the following 496-residue polypeptide: Inosine-5'-monophosphate dehydrogenase (496 aa).

2 CBS domains span residues 96–152 and 156–212; these read VIKD…TKKV and MTKD…PQAA. NAD(+) is bound by residues aspartate 247 and 299-301; that span reads GIG. K(+) is bound by residues glycine 301 and glycine 303. Serine 304 contacts IMP. Cysteine 306 is a binding site for K(+). Residue cysteine 306 is the Thioimidate intermediate of the active site. IMP-binding positions include 339–341, 362–363, and 386–390; these read DGG, GS, and YRGMG. Arginine 405 serves as the catalytic Proton acceptor. Glutamate 423 contributes to the IMP binding site. Positions 477, 478, and 479 each coordinate K(+).

It belongs to the IMPDH/GMPR family. Homotetramer. The cofactor is K(+).

It carries out the reaction IMP + NAD(+) + H2O = XMP + NADH + H(+). It functions in the pathway purine metabolism; XMP biosynthesis via de novo pathway; XMP from IMP: step 1/1. With respect to regulation, mycophenolic acid (MPA) is a non-competitive inhibitor that prevents formation of the closed enzyme conformation by binding to the same site as the amobile flap. In contrast, mizoribine monophosphate (MZP) is a competitive inhibitor that induces the closed conformation. MPA is a potent inhibitor of mammalian IMPDHs but a poor inhibitor of the bacterial enzymes. MZP is a more potent inhibitor of bacterial IMPDH. Catalyzes the conversion of inosine 5'-phosphate (IMP) to xanthosine 5'-phosphate (XMP), the first committed and rate-limiting step in the de novo synthesis of guanine nucleotides, and therefore plays an important role in the regulation of cell growth. The chain is Inosine-5'-monophosphate dehydrogenase from Methanocaldococcus jannaschii (strain ATCC 43067 / DSM 2661 / JAL-1 / JCM 10045 / NBRC 100440) (Methanococcus jannaschii).